Consider the following 155-residue polypeptide: MSKITEQVETIIQPVLNDLNFELVEVEFTKEGKDHFLRVSIDKEGGVDLNDCALASEKISEVMDAEDPIQEMYYLDVASPGAERPIKKEKDFQNAITKPVFVSLYAPIEGSKEWLGILQSVDETNIVMEVKEKAKTKQIEIPRNKIAKARHAVMI.

This sequence belongs to the RimP family.

Its subcellular location is the cytoplasm. Required for maturation of 30S ribosomal subunits. The protein is Ribosome maturation factor RimP of Staphylococcus saprophyticus subsp. saprophyticus (strain ATCC 15305 / DSM 20229 / NCIMB 8711 / NCTC 7292 / S-41).